A 341-amino-acid polypeptide reads, in one-letter code: Ketol-acid reductoisomerase (NADP(+)) (341 aa).

Residues 2-181 (VKVYYNGDAN…GSARAGVIET (180 aa)) form the KARI N-terminal Rossmann domain. Residues 25–28 (YGSQ), R48, S52, and 82–85 (DEHQ) each bind NADP(+). H107 is an active-site residue. Position 133 (G133) interacts with NADP(+). The KARI C-terminal knotted domain maps to 182 to 327 (TFKEETETDL…RELRKMMPFV (146 aa)). D190, E194, E226, and E230 together coordinate Mg(2+). S251 provides a ligand contact to substrate.

It belongs to the ketol-acid reductoisomerase family. Mg(2+) serves as cofactor.

It carries out the reaction (2R)-2,3-dihydroxy-3-methylbutanoate + NADP(+) = (2S)-2-acetolactate + NADPH + H(+). The enzyme catalyses (2R,3R)-2,3-dihydroxy-3-methylpentanoate + NADP(+) = (S)-2-ethyl-2-hydroxy-3-oxobutanoate + NADPH + H(+). It participates in amino-acid biosynthesis; L-isoleucine biosynthesis; L-isoleucine from 2-oxobutanoate: step 2/4. It functions in the pathway amino-acid biosynthesis; L-valine biosynthesis; L-valine from pyruvate: step 2/4. Its function is as follows. Involved in the biosynthesis of branched-chain amino acids (BCAA). Catalyzes an alkyl-migration followed by a ketol-acid reduction of (S)-2-acetolactate (S2AL) to yield (R)-2,3-dihydroxy-isovalerate. In the isomerase reaction, S2AL is rearranged via a Mg-dependent methyl migration to produce 3-hydroxy-3-methyl-2-ketobutyrate (HMKB). In the reductase reaction, this 2-ketoacid undergoes a metal-dependent reduction by NADPH to yield (R)-2,3-dihydroxy-isovalerate. In Anoxybacillus flavithermus (strain DSM 21510 / WK1), this protein is Ketol-acid reductoisomerase (NADP(+)).